The primary structure comprises 309 residues: Heme A synthase (309 aa).

At 1–6 the chain is on the cytoplasmic side; that stretch reads MTKKLK. The chain crosses the membrane as a helical span at residues 7–27; it reads ILSVISTICMIPLLLGGALVT. The Extracellular segment spans residues 28–62; that stretch reads KTGSADGCGNSWPLCEGQFLPTKISFEMFIELSHR. The cysteines at positions 35 and 42 are disulfide-linked. Residue E58 is part of the active site. Heme o is bound at residue H61. A helical transmembrane segment spans residues 63–83; that stretch reads GVTGVVGILIVYLTYLVWKEL. The Cytoplasmic segment spans residues 84 to 88; it reads RHNKE. Residues 89–109 form a helical membrane-spanning segment; sequence VVFLAFSALSLMILQALIGAA. Residues 110 to 123 are Extracellular-facing; sequence AVVWGQSDFALATH. Residue H123 participates in heme o binding. The chain crosses the membrane as a helical span at residues 124–144; the sequence is FGISLVCFAAVFLLMLQLFEI. At 145-159 the chain is on the cytoplasmic side; the sequence is DKKLHTEDIHINKTH. Residues 160-180 form a helical membrane-spanning segment; sequence RIEIYAISFYTMCVVYSGALV. Residues 181–211 lie on the Extracellular side of the membrane; sequence RHTDSNLACRDWPLCVNNSSFGISDYNFYQW. C189 and C195 are disulfide-bonded. A helical transmembrane segment spans residues 212–232; that stretch reads VQMGHRLAAGILFIWTVILTI. H216 provides a ligand contact to heme b. Topologically, residues 233-247 are cytoplasmic; it reads RMVKHYKNSKVFYWS. A helical membrane pass occupies residues 248–268; it reads WLITLGLITLQVLFGALIIFT. Topologically, residues 269–271 are extracellular; sequence SLN. The chain crosses the membrane as a helical span at residues 272-292; it reads LAIALFHALFITCYFGMLSFF. H278 lines the heme b pocket. Residues 293–309 are Cytoplasmic-facing; it reads MHLSFRAKRREKYSNQS.

It belongs to the COX15/CtaA family. Type 1 subfamily. In terms of assembly, interacts with CtaB. Heme b serves as cofactor.

The protein localises to the cell membrane. The enzyme catalyses Fe(II)-heme o + 2 A + H2O = Fe(II)-heme a + 2 AH2. Its pathway is porphyrin-containing compound metabolism; heme A biosynthesis; heme A from heme O: step 1/1. In terms of biological role, catalyzes the conversion of heme O to heme A by two successive hydroxylations of the methyl group at C8. The first hydroxylation forms heme I, the second hydroxylation results in an unstable dihydroxymethyl group, which spontaneously dehydrates, resulting in the formyl group of heme A. In Oceanobacillus iheyensis (strain DSM 14371 / CIP 107618 / JCM 11309 / KCTC 3954 / HTE831), this protein is Heme A synthase.